Here is a 170-residue protein sequence, read N- to C-terminus: Lipoprotein signal peptidase (170 aa).

3 helical membrane passes run 9–29 (FNIFVFVISLIFFDQLSKYLV), 72–92 (IFFIAMPIFILIFVFSLALKE), and 95–117 (CITRISLLLIFSGGVGNIIDRLF). Catalysis depends on residues aspartate 124 and aspartate 146. The helical transmembrane segment at 143 to 163 (NFADSYVVIGMILFLVYDFFI) threads the bilayer.

It belongs to the peptidase A8 family.

The protein resides in the cell inner membrane. It carries out the reaction Release of signal peptides from bacterial membrane prolipoproteins. Hydrolyzes -Xaa-Yaa-Zaa-|-(S,diacylglyceryl)Cys-, in which Xaa is hydrophobic (preferably Leu), and Yaa (Ala or Ser) and Zaa (Gly or Ala) have small, neutral side chains.. It functions in the pathway protein modification; lipoprotein biosynthesis (signal peptide cleavage). In terms of biological role, this protein specifically catalyzes the removal of signal peptides from prolipoproteins. In Borrelia garinii subsp. bavariensis (strain ATCC BAA-2496 / DSM 23469 / PBi) (Borreliella bavariensis), this protein is Lipoprotein signal peptidase.